The sequence spans 474 residues: Glutamate--tRNA ligase (474 aa).

The short motif at 9-19 (PSPTGFLHVGG) is the 'HIGH' region element. Positions 240-244 (KLSKR) match the 'KMSKS' region motif. Lysine 243 provides a ligand contact to ATP.

This sequence belongs to the class-I aminoacyl-tRNA synthetase family. Glutamate--tRNA ligase type 1 subfamily. Monomer.

It is found in the cytoplasm. The catalysed reaction is tRNA(Glu) + L-glutamate + ATP = L-glutamyl-tRNA(Glu) + AMP + diphosphate. In terms of biological role, catalyzes the attachment of glutamate to tRNA(Glu) in a two-step reaction: glutamate is first activated by ATP to form Glu-AMP and then transferred to the acceptor end of tRNA(Glu). This chain is Glutamate--tRNA ligase, found in Photobacterium profundum (strain SS9).